Consider the following 325-residue polypeptide: Peroxidase 68 (325 aa).

The first 28 residues, 1–28 (MECYEQSRQRAAFVVLLFIVMLGSQAQA), serve as a signal peptide directing secretion. Gln29 bears the Pyrrolidone carboxylic acid mark. 4 disulfide bridges follow: Cys39–Cys119, Cys72–Cys77, Cys125–Cys321, and Cys205–Cys230. His70 acts as the Proton acceptor in catalysis. The Ca(2+) site is built by Asp71, Val74, Gly76, Asp78, and Ser80. Asn99 carries N-linked (GlcNAc...) asparagine glycosylation. A substrate-binding site is contributed by Pro168. His198 lines the heme b pocket. Residue Thr199 participates in Ca(2+) binding. N-linked (GlcNAc...) asparagine glycosylation occurs at Asn214. 3 residues coordinate Ca(2+): Asp245, Thr248, and Asp253.

It belongs to the peroxidase family. Classical plant (class III) peroxidase subfamily. It depends on heme b as a cofactor. Ca(2+) serves as cofactor.

It is found in the secreted. The catalysed reaction is 2 a phenolic donor + H2O2 = 2 a phenolic radical donor + 2 H2O. Its function is as follows. Removal of H(2)O(2), oxidation of toxic reductants, biosynthesis and degradation of lignin, suberization, auxin catabolism, response to environmental stresses such as wounding, pathogen attack and oxidative stress. These functions might be dependent on each isozyme/isoform in each plant tissue. This is Peroxidase 68 (PER68) from Arabidopsis thaliana (Mouse-ear cress).